The chain runs to 409 residues: NADH-quinone oxidoreductase subunit D (409 aa).

It belongs to the complex I 49 kDa subunit family. NDH-1 is composed of 14 different subunits. Subunits NuoB, C, D, E, F, and G constitute the peripheral sector of the complex.

The protein resides in the cell inner membrane. The enzyme catalyses a quinone + NADH + 5 H(+)(in) = a quinol + NAD(+) + 4 H(+)(out). Its function is as follows. NDH-1 shuttles electrons from NADH, via FMN and iron-sulfur (Fe-S) centers, to quinones in the respiratory chain. The immediate electron acceptor for the enzyme in this species is believed to be ubiquinone. Couples the redox reaction to proton translocation (for every two electrons transferred, four hydrogen ions are translocated across the cytoplasmic membrane), and thus conserves the redox energy in a proton gradient. This Helicobacter pylori (strain HPAG1) protein is NADH-quinone oxidoreductase subunit D.